Consider the following 445-residue polypeptide: Histidinol dehydrogenase (445 aa).

Residues Y136, Q200, and N228 each coordinate NAD(+). Substrate is bound by residues T251, Q273, and H276. Zn(2+) contacts are provided by Q273 and H276. Catalysis depends on proton acceptor residues E342 and H343. The substrate site is built by H343, D376, E430, and H435. Zn(2+) is bound at residue D376. H435 contributes to the Zn(2+) binding site.

It belongs to the histidinol dehydrogenase family. It depends on Zn(2+) as a cofactor.

It carries out the reaction L-histidinol + 2 NAD(+) + H2O = L-histidine + 2 NADH + 3 H(+). Its pathway is amino-acid biosynthesis; L-histidine biosynthesis; L-histidine from 5-phospho-alpha-D-ribose 1-diphosphate: step 9/9. In terms of biological role, catalyzes the sequential NAD-dependent oxidations of L-histidinol to L-histidinaldehyde and then to L-histidine. This is Histidinol dehydrogenase (hisD) from Mycolicibacterium smegmatis (Mycobacterium smegmatis).